The chain runs to 346 residues: MSLAQTIMPEGYIFPPKPVPLTQNEQGEYKARIKQLLQEKNAVLVAHYYTDPEIQALAEETGGCVADSLEMARFGTRHDADMIIVAGVRFMGETAKILTPNKTVVMPTLEATCSLDIGCPVDEFSAFCDQHPDRTVVVYANTSTAVKARADWIVTSSCALEIVEHLDELGEKIIWGPDKHLGSYIQKNTGADMIMWNGACIVHDEFKTKALKDMKALHPDAGVLVHPESPEEIVALADAVGSTSQLIKAAQTMSNKKFIVATDRGIFYKMQQLCPDKEFFAAPTAGEGASCKTCAHCPWMAMNGLKAIEEALIDPKGKEVFVDMDLREGALKSLNRMLDFTATMAK.

Iminosuccinate is bound by residues histidine 47 and serine 68. Cysteine 113 contacts [4Fe-4S] cluster. Residues 139 to 141 (YAN) and serine 156 each bind iminosuccinate. Cysteine 200 contacts [4Fe-4S] cluster. Residues 226–228 (HPE) and threonine 243 each bind iminosuccinate. Cysteine 297 provides a ligand contact to [4Fe-4S] cluster.

The protein belongs to the quinolinate synthase family. Type 1 subfamily. It depends on [4Fe-4S] cluster as a cofactor.

Its subcellular location is the cytoplasm. It catalyses the reaction iminosuccinate + dihydroxyacetone phosphate = quinolinate + phosphate + 2 H2O + H(+). The protein operates within cofactor biosynthesis; NAD(+) biosynthesis; quinolinate from iminoaspartate: step 1/1. In terms of biological role, catalyzes the condensation of iminoaspartate with dihydroxyacetone phosphate to form quinolinate. The chain is Quinolinate synthase from Pseudoalteromonas translucida (strain TAC 125).